An 879-amino-acid polypeptide reads, in one-letter code: Leucine--tRNA ligase (879 aa).

The short motif at 43–53 (PYPSGRIHMGH) is the 'HIGH' region element. Residues 636-640 (KMSKS) carry the 'KMSKS' region motif. Residue lysine 639 participates in ATP binding.

Belongs to the class-I aminoacyl-tRNA synthetase family.

It localises to the cytoplasm. The enzyme catalyses tRNA(Leu) + L-leucine + ATP = L-leucyl-tRNA(Leu) + AMP + diphosphate. This chain is Leucine--tRNA ligase, found in Afipia carboxidovorans (strain ATCC 49405 / DSM 1227 / KCTC 32145 / OM5) (Oligotropha carboxidovorans).